A 449-amino-acid polypeptide reads, in one-letter code: 3-phosphoshikimate 1-carboxyvinyltransferase (449 aa).

A disordered region spans residues 1–26 (MNHHLPSRPARSRQSQGLKGNLRVPG). 3-phosphoshikimate is bound by residues lysine 28, serine 29, and arginine 33. Position 28 (lysine 28) interacts with phosphoenolpyruvate. Glycine 100 and arginine 128 together coordinate phosphoenolpyruvate. Serine 174, glutamine 176, aspartate 327, and lysine 354 together coordinate 3-phosphoshikimate. Glutamine 176 is a binding site for phosphoenolpyruvate. The active-site Proton acceptor is the aspartate 327. 2 residues coordinate phosphoenolpyruvate: arginine 358 and arginine 403.

This sequence belongs to the EPSP synthase family. As to quaternary structure, monomer.

Its subcellular location is the cytoplasm. The enzyme catalyses 3-phosphoshikimate + phosphoenolpyruvate = 5-O-(1-carboxyvinyl)-3-phosphoshikimate + phosphate. It participates in metabolic intermediate biosynthesis; chorismate biosynthesis; chorismate from D-erythrose 4-phosphate and phosphoenolpyruvate: step 6/7. Functionally, catalyzes the transfer of the enolpyruvyl moiety of phosphoenolpyruvate (PEP) to the 5-hydroxyl of shikimate-3-phosphate (S3P) to produce enolpyruvyl shikimate-3-phosphate and inorganic phosphate. In Chelativorans sp. (strain BNC1), this protein is 3-phosphoshikimate 1-carboxyvinyltransferase.